A 682-amino-acid polypeptide reads, in one-letter code: Heat shock 70 kDa protein 9, mitochondrial (682 aa).

The transit peptide at Met-1–Cys-46 directs the protein to the mitochondrion. A disordered region spans residues Ser-640 to Lys-682. Gly residues predominate over residues Gly-651–Thr-663.

It belongs to the heat shock protein 70 (TC 1.A.33) family. DnaK subfamily. In terms of assembly, interacts with HSCB.

It is found in the mitochondrion. The protein localises to the cytoplasm. Its subcellular location is the cytosol. In terms of biological role, chaperone involved in the maturation of iron-sulfur [Fe-S] cluster-containing proteins. Has a low intrinsic ATPase activity which is markedly stimulated by HSCB and ISU1. In cooperation with other chaperones, Hsp70s are key components that facilitate folding of de novo synthesized proteins, assist translocation of precursor proteins into organelles, and are responsible for degradation of damaged protein under stress conditions. This Arabidopsis thaliana (Mouse-ear cress) protein is Heat shock 70 kDa protein 9, mitochondrial.